The sequence spans 264 residues: Thiazole synthase (264 aa).

The Schiff-base intermediate with DXP role is filled by Lys-106. 1-deoxy-D-xylulose 5-phosphate-binding positions include Gly-167, 193–194 (AG), and 215–216 (NS).

Belongs to the ThiG family. Homotetramer. Forms heterodimers with either ThiH or ThiS.

The protein localises to the cytoplasm. The enzyme catalyses [ThiS sulfur-carrier protein]-C-terminal-Gly-aminoethanethioate + 2-iminoacetate + 1-deoxy-D-xylulose 5-phosphate = [ThiS sulfur-carrier protein]-C-terminal Gly-Gly + 2-[(2R,5Z)-2-carboxy-4-methylthiazol-5(2H)-ylidene]ethyl phosphate + 2 H2O + H(+). Its pathway is cofactor biosynthesis; thiamine diphosphate biosynthesis. In terms of biological role, catalyzes the rearrangement of 1-deoxy-D-xylulose 5-phosphate (DXP) to produce the thiazole phosphate moiety of thiamine. Sulfur is provided by the thiocarboxylate moiety of the carrier protein ThiS. In vitro, sulfur can be provided by H(2)S. The sequence is that of Thiazole synthase from Azotobacter vinelandii (strain DJ / ATCC BAA-1303).